We begin with the raw amino-acid sequence, 383 residues long: Lipid-A-disaccharide synthase (383 aa).

Belongs to the LpxB family.

The enzyme catalyses a lipid X + a UDP-2-N,3-O-bis[(3R)-3-hydroxyacyl]-alpha-D-glucosamine = a lipid A disaccharide + UDP + H(+). Its pathway is bacterial outer membrane biogenesis; LPS lipid A biosynthesis. In terms of biological role, condensation of UDP-2,3-diacylglucosamine and 2,3-diacylglucosamine-1-phosphate to form lipid A disaccharide, a precursor of lipid A, a phosphorylated glycolipid that anchors the lipopolysaccharide to the outer membrane of the cell. The protein is Lipid-A-disaccharide synthase of Anaeromyxobacter sp. (strain K).